The sequence spans 564 residues: Potassium-transporting ATPase potassium-binding subunit (564 aa).

Transmembrane regions (helical) follow at residues 7–27 (LLIL…GRFF), 67–87 (AWAL…MLML), 135–155 (VGLT…LVAL), 179–199 (LYAL…QGVP), 258–278 (FELV…GHYV), 286–306 (AILG…LWAE), 382–402 (VGLN…GLMI), 420–440 (LLVA…AIAA), 487–507 (LMLS…VLAL), and 528–548 (GLLF…LTFL).

Belongs to the KdpA family. The system is composed of three essential subunits: KdpA, KdpB and KdpC.

The protein localises to the cell inner membrane. Its function is as follows. Part of the high-affinity ATP-driven potassium transport (or Kdp) system, which catalyzes the hydrolysis of ATP coupled with the electrogenic transport of potassium into the cytoplasm. This subunit binds the periplasmic potassium ions and delivers the ions to the membrane domain of KdpB through an intramembrane tunnel. This is Potassium-transporting ATPase potassium-binding subunit from Pseudomonas syringae pv. tomato (strain ATCC BAA-871 / DC3000).